The following is a 114-amino-acid chain: Large ribosomal subunit protein uL18 (114 aa).

This sequence belongs to the universal ribosomal protein uL18 family. As to quaternary structure, part of the 50S ribosomal subunit; part of the 5S rRNA/L5/L18/L25 subcomplex. Contacts the 5S and 23S rRNAs.

Its function is as follows. This is one of the proteins that bind and probably mediate the attachment of the 5S RNA into the large ribosomal subunit, where it forms part of the central protuberance. This is Large ribosomal subunit protein uL18 from Porphyromonas gingivalis (strain ATCC 33277 / DSM 20709 / CIP 103683 / JCM 12257 / NCTC 11834 / 2561).